The primary structure comprises 412 residues: MADNKRIVLAYSGGLDTSVAISYLKERTGKDVVAVSLDVGQGGESLETIKQRALACGAVESYVVDARDEFANEYCMKALKANAMYEGVYPLVSAISRPLISKHLVRAAHQFGADTISHGCTGKGNDQVRFEVSIASIDPTLKAISPIRDLSLTRDVEIAFAKEHKLPITQTEKSPYSIDQNVWGRAIETGFLEDPWNGPTKDCYSYTDDPAFPPVEDEVVIEFKEGVPVKIDGRDVTPLQAIEEMNRRAGAQGVGRIDLIEDRLVGIKSRELYEAPGAVALITAHQELENCCLEREQHRIKRDIDKRWGELVYDAQWFSPATQSLNAFIEDTQKYVSGEIRMVLHGGRAVVTGRRSDSSLYDYKLATYDSGDTFDQKSSNGFIDIYGLPSRVAAARDVKFGNGIEVPKNTVE.

ATP is bound at residue 10-18 (AYSGGLDTS). Residue Tyr-89 coordinates L-citrulline. Gly-119 lines the ATP pocket. 3 residues coordinate L-aspartate: Thr-121, Asn-125, and Asp-126. Residue Asn-125 coordinates L-citrulline. Arg-129, Ser-177, Glu-261, and Tyr-273 together coordinate L-citrulline.

It belongs to the argininosuccinate synthase family. Type 1 subfamily. As to quaternary structure, homotetramer.

It is found in the cytoplasm. It catalyses the reaction L-citrulline + L-aspartate + ATP = 2-(N(omega)-L-arginino)succinate + AMP + diphosphate + H(+). It functions in the pathway amino-acid biosynthesis; L-arginine biosynthesis; L-arginine from L-ornithine and carbamoyl phosphate: step 2/3. The chain is Argininosuccinate synthase from Bifidobacterium longum (strain NCC 2705).